Here is a 128-residue protein sequence, read N- to C-terminus: Large ribosomal subunit protein eL8 (128 aa).

Belongs to the eukaryotic ribosomal protein eL8 family. In terms of assembly, part of the 50S ribosomal subunit. Probably part of the RNase P complex.

The protein localises to the cytoplasm. Multifunctional RNA-binding protein that recognizes the K-turn motif in ribosomal RNA, the RNA component of RNase P, box H/ACA, box C/D and box C'/D' sRNAs. In Staphylothermus marinus (strain ATCC 43588 / DSM 3639 / JCM 9404 / F1), this protein is Large ribosomal subunit protein eL8.